Consider the following 185-residue polypeptide: Signal peptidase complex subunit 3 (185 aa).

The Cytoplasmic segment spans residues 1-16; it reads MHTSIQRIQQTFSQAS. Residues 17 to 37 traverse the membrane as a helical; Signal-anchor for type II membrane protein segment; it reads TVLSIIAAIVFVVSYIQLVVA. The Lumenal segment spans residues 38–185; that stretch reads NVWSLPEANF…KGSIKFPQLV (148 aa). N-linked (GlcNAc...) asparagine glycosylation is present at Asn151.

Belongs to the SPCS3 family. As to quaternary structure, component of the signal peptidase complex (SPC) composed of a catalytic subunit SEC11 and three accessory subunits SPC1, SPC2 and SPC3. The complex induces a local thinning of the ER membrane which is used to measure the length of the signal peptide (SP) h-region of protein substrates. This ensures the selectivity of the complex towards h-regions shorter than 18-20 amino acids. SPC associates with the translocon complex.

It localises to the endoplasmic reticulum membrane. In terms of biological role, essential component of the signal peptidase complex (SPC) which catalyzes the cleavage of N-terminal signal sequences from nascent proteins as they are translocated into the lumen of the endoplasmic reticulum. Essential for the SPC catalytic activity, possibly by stabilizing and positioning the active center of the complex close to the lumenal surface. Essential for viability. In Yarrowia lipolytica (strain CLIB 122 / E 150) (Yeast), this protein is Signal peptidase complex subunit 3 (SPC3).